A 200-amino-acid polypeptide reads, in one-letter code: Imidazoleglycerol-phosphate dehydratase (200 aa).

It belongs to the imidazoleglycerol-phosphate dehydratase family.

The protein localises to the cytoplasm. It catalyses the reaction D-erythro-1-(imidazol-4-yl)glycerol 3-phosphate = 3-(imidazol-4-yl)-2-oxopropyl phosphate + H2O. It participates in amino-acid biosynthesis; L-histidine biosynthesis; L-histidine from 5-phospho-alpha-D-ribose 1-diphosphate: step 6/9. This chain is Imidazoleglycerol-phosphate dehydratase, found in Chlorobium phaeobacteroides (strain DSM 266 / SMG 266 / 2430).